The following is a 123-amino-acid chain: Small ribosomal subunit protein uS12 (123 aa).

The residue at position 89 (Asp89) is a 3-methylthioaspartic acid.

The protein belongs to the universal ribosomal protein uS12 family. As to quaternary structure, part of the 30S ribosomal subunit. Contacts proteins S8 and S17. May interact with IF1 in the 30S initiation complex.

In terms of biological role, with S4 and S5 plays an important role in translational accuracy. Functionally, interacts with and stabilizes bases of the 16S rRNA that are involved in tRNA selection in the A site and with the mRNA backbone. Located at the interface of the 30S and 50S subunits, it traverses the body of the 30S subunit contacting proteins on the other side and probably holding the rRNA structure together. The combined cluster of proteins S8, S12 and S17 appears to hold together the shoulder and platform of the 30S subunit. This Methylobacterium sp. (strain 4-46) protein is Small ribosomal subunit protein uS12.